The following is a 430-amino-acid chain: Adenylosuccinate synthetase (430 aa).

GTP is bound by residues glycine 12–lysine 18 and glycine 40–threonine 42. Residue aspartate 13 is the Proton acceptor of the active site. Mg(2+)-binding residues include aspartate 13 and glycine 40. IMP is bound by residues aspartate 13 to lysine 16, asparagine 38 to histidine 41, threonine 128, arginine 142, glutamine 223, threonine 238, and arginine 302. Histidine 41 serves as the catalytic Proton donor. Residue threonine 298–arginine 304 participates in substrate binding. GTP-binding positions include arginine 304, serine 330 to aspartate 332, and serine 412 to glycine 414.

The protein belongs to the adenylosuccinate synthetase family. In terms of assembly, homodimer. Requires Mg(2+) as cofactor.

It localises to the cytoplasm. The enzyme catalyses IMP + L-aspartate + GTP = N(6)-(1,2-dicarboxyethyl)-AMP + GDP + phosphate + 2 H(+). It functions in the pathway purine metabolism; AMP biosynthesis via de novo pathway; AMP from IMP: step 1/2. In terms of biological role, plays an important role in the de novo pathway of purine nucleotide biosynthesis. Catalyzes the first committed step in the biosynthesis of AMP from IMP. In Streptococcus pyogenes serotype M5 (strain Manfredo), this protein is Adenylosuccinate synthetase.